The sequence spans 886 residues: Cytosolic carboxypeptidase-like protein 5 (886 aa).

The Peptidase M14 domain occupies 157–570; the sequence is YPFSYSDCQE…AMAIAALDMA (414 aa). Zn(2+)-binding residues include His252 and Glu255. Residues 344-354 are compositionally biased toward low complexity; the sequence is SQSSSEHQPSS. Residues 344 to 364 are disordered; it reads SQSSSEHQPSSCLPPDAPVSD. Residue His434 participates in Zn(2+) binding. Glu516 acts as the Proton donor/acceptor in catalysis. Disordered stretches follow at residues 605–734 and 784–848; these read STLN…SSHK and LQAR…FSPI. Residues 631-640 are compositionally biased toward polar residues; the sequence is CSENTLSRAR. Residues 641–666 show a composition bias toward low complexity; the sequence is SFSTGTSAGGSSSSQQNSPQMKNSPS. The segment covering 696–705 has biased composition (basic and acidic residues); that stretch reads REPRSQDRRR. Residues 714–732 show a composition bias toward low complexity; sequence PAGSLAPSPAPTSSGPASS. Ser841 carries the post-translational modification Phosphoserine.

Belongs to the peptidase M14 family. Zn(2+) is required as a cofactor. In terms of tissue distribution, expressed in brain.

The protein resides in the cytoplasm. The protein localises to the cytosol. It localises to the nucleus. It is found in the cytoskeleton. Its subcellular location is the spindle. The protein resides in the midbody. It catalyses the reaction gamma-L-glutamyl-L-glutamyl-[protein] + H2O = L-glutamyl-[protein] + L-glutamate. It carries out the reaction (L-glutamyl)(n+1)-gamma-L-glutamyl-L-glutamyl-[protein] + H2O = (L-glutamyl)(n)-gamma-L-glutamyl-L-glutamyl-[protein] + L-glutamate. The catalysed reaction is C-terminal L-alpha-aminoacyl-L-glutamyl-[tubulin] + H2O = C-terminal L-alpha-aminoacyl-[tubulin] + L-glutamate. The enzyme catalyses C-terminal L-alpha-aminoacyl-L-glutamyl-L-glutamyl-[tubulin] + H2O = C-terminal L-alpha-aminoacyl-L-glutamyl-[tubulin] + L-glutamate. Functionally, metallocarboxypeptidase that mediates deglutamylation of tubulin and non-tubulin target proteins. Catalyzes the removal of polyglutamate side chains present on the gamma-carboxyl group of glutamate residues within the C-terminal tail of alpha- and beta-tubulin. Cleaves alpha- and gamma-linked polyglutamate tubulin side-chain, as well as the branching point glutamate. Also catalyzes the removal of alpha-linked glutamate residues from the carboxy-terminus of alpha-tubulin. Mediates deglutamylation of nucleotidyltransferase CGAS, leading to CGAS antiviral defense response activation. In Homo sapiens (Human), this protein is Cytosolic carboxypeptidase-like protein 5.